The sequence spans 125 residues: U-scoloptoxin(05)-Sm1a (125 aa).

The signal sequence occupies residues 1-20 (MNVLYTKIFFILILTRTSSA).

It belongs to the scoloptoxin-05 family. Contains 4 disulfide bonds. Expressed by the venom gland.

It is found in the secreted. The chain is U-scoloptoxin(05)-Sm1a from Scolopendra morsitans (Tanzanian blue ringleg centipede).